The sequence spans 167 residues: Translationally-controlled tumor protein homolog (167 aa).

In terms of domain architecture, TCTP spans 1–167; sequence MIIYKDIFSN…WKHGIVEEKI (167 aa). Phosphoserine occurs at positions 9 and 15.

Belongs to the TCTP family. As to quaternary structure, interacts with the 40S and 60S ribosomal subunits. Interacts with microtubules.

It is found in the cytoplasm. It localises to the cytoskeleton. The protein resides in the mitochondrion. In terms of biological role, involved in protein synthesis. Involved in microtubule stabilization. This is Translationally-controlled tumor protein homolog (TMA19) from Saccharomyces cerevisiae (strain ATCC 204508 / S288c) (Baker's yeast).